A 197-amino-acid chain; its full sequence is Pinin homolog 1 (197 aa).

Positions 30–73 (LDGKVNNEDSHMEIDQPEGSMEEDDHRQVKEKNTSENSVEQKRG) are disordered. Composition is skewed to basic and acidic residues over residues 34-43 (VNNEDSHMEI) and 53-71 (DDHR…VEQK).

Belongs to the pinin family.

The protein localises to the nucleus. It localises to the cytoplasm. Transcriptional activator that may participate in the regulation of mRNA splicing. In Schizosaccharomyces pombe (strain 972 / ATCC 24843) (Fission yeast), this protein is Pinin homolog 1 (pnn1).